The chain runs to 40 residues: IPRPLDPCIAQNGRCFTGICRYPYFWIGTCRNGKSCCRRR.

3 disulfides stabilise this stretch: C8-C36, C15-C30, and C20-C37.

The protein localises to the secreted. Its function is as follows. Has antibacterial activity against the Gram-positive bacterium S.aureus 1056 MRSA (MIC=2.78 ug/ml) and the Gram-negative bacterium E.coli O157:H7 (MIC=2.41 ug/ml). Does not have antifungal activity against the yeast C.albicans 3153A. This is Ostricacin-3 from Struthio camelus (Common ostrich).